A 131-amino-acid polypeptide reads, in one-letter code: Ribonuclease P protein component (131 aa).

It belongs to the RnpA family. Consists of a catalytic RNA component (M1 or rnpB) and a protein subunit.

The enzyme catalyses Endonucleolytic cleavage of RNA, removing 5'-extranucleotides from tRNA precursor.. RNaseP catalyzes the removal of the 5'-leader sequence from pre-tRNA to produce the mature 5'-terminus. It can also cleave other RNA substrates such as 4.5S RNA. The protein component plays an auxiliary but essential role in vivo by binding to the 5'-leader sequence and broadening the substrate specificity of the ribozyme. The sequence is that of Ribonuclease P protein component from Synechococcus sp. (strain WH7803).